The chain runs to 106 residues: MGKTNDWLNFEQLADDKVREELKPPSMYKVILNNDDFTPMEFVIDVLQKFFSYDIERATQLMLTVHYQGKAICGVFTAEVAETKVAHVNKYARDNEHPLLCTLEKA.

The protein belongs to the ClpS family. In terms of assembly, binds to the N-terminal domain of the chaperone ClpA.

Involved in the modulation of the specificity of the ClpAP-mediated ATP-dependent protein degradation. The protein is ATP-dependent Clp protease adapter protein ClpS of Erwinia tasmaniensis (strain DSM 17950 / CFBP 7177 / CIP 109463 / NCPPB 4357 / Et1/99).